The chain runs to 186 residues: Large ribosomal subunit protein uL22 (186 aa).

Residues 159–186 (KATDEEPTKKKLSKKKLQRQKEKMMRSE) form a disordered region. Residues 177 to 186 (RQKEKMMRSE) are compositionally biased toward basic and acidic residues.

This sequence belongs to the universal ribosomal protein uL22 family.

The sequence is that of Large ribosomal subunit protein uL22 (RpL17) from Phlebotomus papatasi (Sandfly).